A 191-amino-acid polypeptide reads, in one-letter code: CASP-like protein 4C2 (191 aa).

Topologically, residues 1–29 are cytoplasmic; that stretch reads MEAADSATNNSKDTHFYGKSRAENRRRSD. The chain crosses the membrane as a helical span at residues 30 to 50; sequence AMLLLFRALTFSFSLAAVVVM. At 51–72 the chain is on the extracellular side; the sequence is GTNRYRINPQLKVSWYDFEPYR. A helical membrane pass occupies residues 73-93; the sequence is YVLAVNAIICIYSFVETWLAV. Topologically, residues 94–116 are cytoplasmic; that stretch reads YTYLQGSYLLPEIFQVWFDYGHD. A helical transmembrane segment spans residues 117–137; that stretch reads QGFAYLLFSANSAGVAMAQLL. The Extracellular segment spans residues 138-161; that stretch reads QSGNTLIHGAYHCTEAGGYCTQAR. A helical transmembrane segment spans residues 162–182; it reads VSIALGFVAFLFLALSSLLTG. The Cytoplasmic segment spans residues 183 to 191; that stretch reads LRVARWYLR.

The protein belongs to the Casparian strip membrane proteins (CASP) family. As to quaternary structure, homodimer and heterodimers.

It is found in the cell membrane. The polypeptide is CASP-like protein 4C2 (Physcomitrium patens (Spreading-leaved earth moss)).